Consider the following 273-residue polypeptide: MTLDLQTTIENAWENRTNLSPVDATAEVREAVEQTIAALDLGRLRVAEKTEAGWIVHQWIKKAVLLSFRLQDNAIMGQAPMQFYDKVPLKFAEYGDTAFQHGGYRVVPPAVARRGAFIARNVVLMPSYVNIGAYVDEGTMVDTWATVGSCAQIGKNVHLSGGVGIGGVLEPLQANPTIIEDNCFIGARSEVVEGVVVEENSVLAMGVFLSQSTKIYDRATGKVTYGRVPSGSVVVPGSLPSEDGSHSLVCAVIVKRVDAQTRAKTSINDLLRA.

Belongs to the transferase hexapeptide repeat family.

The protein localises to the cytoplasm. The enzyme catalyses (S)-2,3,4,5-tetrahydrodipicolinate + succinyl-CoA + H2O = (S)-2-succinylamino-6-oxoheptanedioate + CoA. The protein operates within amino-acid biosynthesis; L-lysine biosynthesis via DAP pathway; LL-2,6-diaminopimelate from (S)-tetrahydrodipicolinate (succinylase route): step 1/3. This is 2,3,4,5-tetrahydropyridine-2,6-dicarboxylate N-succinyltransferase from Bordetella petrii (strain ATCC BAA-461 / DSM 12804 / CCUG 43448).